The primary structure comprises 949 residues: Protein translocase subunit SecA 1 (949 aa).

Residues Gln-86, 104–108 (GEGKT), and Asp-493 each bind ATP. Residues 869 to 949 (VDGGARERAP…AKPPKSVKKR (81 aa)) form a disordered region. Over residues 925 to 934 (SRRERREAAR) the composition is skewed to basic and acidic residues.

Belongs to the SecA family. Monomer and homodimer. Part of the essential Sec protein translocation apparatus which comprises SecA, SecYEG and auxiliary proteins SecDF. Other proteins may also be involved.

It localises to the cell membrane. It is found in the cytoplasm. It catalyses the reaction ATP + H2O + cellular proteinSide 1 = ADP + phosphate + cellular proteinSide 2.. Functionally, part of the Sec protein translocase complex. Interacts with the SecYEG preprotein conducting channel. Has a central role in coupling the hydrolysis of ATP to the transfer of proteins into and across the cell membrane, serving as an ATP-driven molecular motor driving the stepwise translocation of polypeptide chains across the membrane. In Mycobacterium bovis (strain ATCC BAA-935 / AF2122/97), this protein is Protein translocase subunit SecA 1.